Reading from the N-terminus, the 110-residue chain is Phosphoribosyl-ATP pyrophosphatase (110 aa).

This sequence belongs to the PRA-PH family.

Its subcellular location is the cytoplasm. The enzyme catalyses 1-(5-phospho-beta-D-ribosyl)-ATP + H2O = 1-(5-phospho-beta-D-ribosyl)-5'-AMP + diphosphate + H(+). It functions in the pathway amino-acid biosynthesis; L-histidine biosynthesis; L-histidine from 5-phospho-alpha-D-ribose 1-diphosphate: step 2/9. This is Phosphoribosyl-ATP pyrophosphatase from Clostridium novyi (strain NT).